Consider the following 382-residue polypeptide: uncharacterized protein (382 aa).

12 helical membrane-spanning segments follow: residues 14-34 (GLLLLTLAIAVLNTLVPLWLA), 45-65 (MVSSSYFTGNLVGTLFTGYLI), 75-95 (YLASLIFAAGCVGLGVMVGFW), 102-122 (FIAGIGCAMIWVVVESALMCS), 131-151 (LLAAYMMVYYVGTFLGQLLVS), 157-177 (LLHVLPWVTGMILAGILPLLF), 204-224 (LGVNGCIISGIVLGSLYGLMP), 235-255 (ASIGFWMAVLVSAGILGQWPV), 265-284 (LLVLRVQVFVVILGSIVMLT), 289-311 (APALFILGAAGFTLYPVAMAWAC), 325-345 (ALLLSYTVGSLLGPSFTAMLM), and 349-369 (SDNLLFLMIASVSFIYLLMLL).

This sequence belongs to the major facilitator superfamily. YcaD (TC 2.A.1.26) family.

It localises to the cell inner membrane. This is an uncharacterized protein from Salmonella arizonae (strain ATCC BAA-731 / CDC346-86 / RSK2980).